The sequence spans 330 residues: Phospho-N-acetylmuramoyl-pentapeptide-transferase (330 aa).

9 helical membrane-spanning segments follow: residues 13–33 (VFVF…LIPM), 58–78 (PTMG…FYAG), 83–103 (ILPL…DDFI), 113–133 (LYWN…AVYL), 152–172 (VSLG…STNA), 179–199 (LDGL…IVAM), 209–229 (MFSA…AYPA), 231–250 (IFMG…AIAI), and 304–324 (VKVV…GFFA).

It belongs to the glycosyltransferase 4 family. MraY subfamily. Mg(2+) is required as a cofactor.

Its subcellular location is the cell membrane. The catalysed reaction is UDP-N-acetyl-alpha-D-muramoyl-L-alanyl-gamma-D-glutamyl-meso-2,6-diaminopimeloyl-D-alanyl-D-alanine + di-trans,octa-cis-undecaprenyl phosphate = di-trans,octa-cis-undecaprenyl diphospho-N-acetyl-alpha-D-muramoyl-L-alanyl-D-glutamyl-meso-2,6-diaminopimeloyl-D-alanyl-D-alanine + UMP. Its pathway is cell wall biogenesis; peptidoglycan biosynthesis. In terms of biological role, catalyzes the initial step of the lipid cycle reactions in the biosynthesis of the cell wall peptidoglycan: transfers peptidoglycan precursor phospho-MurNAc-pentapeptide from UDP-MurNAc-pentapeptide onto the lipid carrier undecaprenyl phosphate, yielding undecaprenyl-pyrophosphoryl-MurNAc-pentapeptide, known as lipid I. This Acetivibrio thermocellus (strain ATCC 27405 / DSM 1237 / JCM 9322 / NBRC 103400 / NCIMB 10682 / NRRL B-4536 / VPI 7372) (Clostridium thermocellum) protein is Phospho-N-acetylmuramoyl-pentapeptide-transferase.